Reading from the N-terminus, the 217-residue chain is Non-structural protein NS3 (217 aa).

The protein belongs to the orbivirus NS3 family.

Its function is as follows. May play a role in the release of virions from infected cells. This Camelus dromedarius (Dromedary) protein is Non-structural protein NS3 (Segment-10).